A 227-amino-acid polypeptide reads, in one-letter code: Phosphoribosylformylglycinamidine synthase subunit PurQ (227 aa).

Residues 3 to 225 (FAVIVLPGSN…VKNWRETHVT (223 aa)) enclose the Glutamine amidotransferase type-1 domain. Cysteine 86 functions as the Nucleophile in the catalytic mechanism. Residues histidine 194 and glutamate 196 contribute to the active site.

In terms of assembly, part of the FGAM synthase complex composed of 1 PurL, 1 PurQ and 2 PurS subunits.

The protein localises to the cytoplasm. The catalysed reaction is N(2)-formyl-N(1)-(5-phospho-beta-D-ribosyl)glycinamide + L-glutamine + ATP + H2O = 2-formamido-N(1)-(5-O-phospho-beta-D-ribosyl)acetamidine + L-glutamate + ADP + phosphate + H(+). It carries out the reaction L-glutamine + H2O = L-glutamate + NH4(+). Its pathway is purine metabolism; IMP biosynthesis via de novo pathway; 5-amino-1-(5-phospho-D-ribosyl)imidazole from N(2)-formyl-N(1)-(5-phospho-D-ribosyl)glycinamide: step 1/2. Its function is as follows. Part of the phosphoribosylformylglycinamidine synthase complex involved in the purines biosynthetic pathway. Catalyzes the ATP-dependent conversion of formylglycinamide ribonucleotide (FGAR) and glutamine to yield formylglycinamidine ribonucleotide (FGAM) and glutamate. The FGAM synthase complex is composed of three subunits. PurQ produces an ammonia molecule by converting glutamine to glutamate. PurL transfers the ammonia molecule to FGAR to form FGAM in an ATP-dependent manner. PurS interacts with PurQ and PurL and is thought to assist in the transfer of the ammonia molecule from PurQ to PurL. This chain is Phosphoribosylformylglycinamidine synthase subunit PurQ, found in Bacillus subtilis (strain 168).